The chain runs to 366 residues: Prostaglandin F2-alpha receptor (366 aa).

Residues 1–31 lie on the Extracellular side of the membrane; it reads MSMNSSKQPVSPAAGLIANTTCQTENRLSVF. N-linked (GlcNAc...) asparagine glycosylation is found at Asn-4 and Asn-19. The chain crosses the membrane as a helical span at residues 32–55; it reads FSIIFMTVGILSNSLAIAILMKAY. The Cytoplasmic segment spans residues 56–69; it reads QRFRQKSKASFLLL. A helical transmembrane segment spans residues 70-90; sequence ASGLVITDFFGHLINGGIAVF. The Extracellular segment spans residues 91 to 109; it reads VYASDKDWIRFDQSNILCS. Cys-108 and Cys-186 form a disulfide bridge. Residues 110-131 form a helical membrane-spanning segment; the sequence is IFGISMVFSGLCPLFLGSAMAI. The Cytoplasmic portion of the chain corresponds to 132 to 152; that stretch reads ERCIGVTNPIFHSTKITSKHV. The chain crosses the membrane as a helical span at residues 153–175; it reads KMILSGVCMFAVFVAVLPILGHR. Over 176 to 198 the chain is Extracellular; it reads DYQIQASRTWCFYNTEHIEDWED. The chain crosses the membrane as a helical span at residues 199 to 224; that stretch reads RFYLLFFSFLGLLALGVSFSCNAVTG. At 225–250 the chain is on the cytoplasmic side; that stretch reads VTLLRVKFRSQQHRQGRSHHLEMIIQ. Residues 251 to 267 form a helical membrane-spanning segment; the sequence is LLAIMCVSCVCWSPFLV. The Extracellular segment spans residues 268 to 285; that stretch reads TMANIAINGNNSPVTCET. Residues 286–307 form a helical membrane-spanning segment; it reads TLFALRMATWNQILDPWVYILL. Residues 308–366 are Cytoplasmic-facing; the sequence is RKAVLRNLYKLASRCCGVNIISLHIWELSSIKNSLKVAAISESPAAEKESQQASSEAGL.

The protein belongs to the G-protein coupled receptor 1 family.

The protein localises to the cell membrane. Functionally, receptor for prostaglandin F2-alpha (PGF2-alpha). The activity of this receptor is mediated by G proteins which activate a phosphatidylinositol-calcium second messenger system. Initiates luteolysis in the corpus luteum. The sequence is that of Prostaglandin F2-alpha receptor (Ptgfr) from Mus musculus (Mouse).